A 242-amino-acid chain; its full sequence is MAAATRSCRPWGSLLGLIWLVSAAAASWDLSSLRCNFGSFCECDFQPDFQGLECDLAQHLAGQHLARSLVVKALKAFLQDPAPTKPLVLSLHGWTGTGKSYVSSLLAHYLFRDGLRSPHVHHFSPVIHFPHPSHLERYKKDLKSWVQGNLTVCSRSLFLFDEMDKLAPGLIEVLRPFLGSSWVVYGTNYRKAIFIFIRWLLALGHHGRASPGRSGALPATPAAPRAALCAQRAGPSGPGAQG.

The first 26 residues, 1-26 (MAAATRSCRPWGSLLGLIWLVSAAAA), serve as a signal peptide directing secretion. Residues 27-189 (SWDLSSLRCN…SSWVVYGTNY (163 aa)) constitute a propeptide that is removed on maturation. Residue 93–100 (GWTGTGKS) coordinates ATP. N-linked (GlcNAc...) asparagine glycosylation is present at N149.

It belongs to the ClpA/ClpB family. Torsin subfamily.

The protein resides in the secreted. Salusin may be a endocrine and/or paracrine factor able to increase intracellular calcium concentrations and induce cell mitogenesis. Salusin may also be a potent hypotensive peptide. The protein is Prosalusin (TOR2A) of Bos taurus (Bovine).